A 264-amino-acid chain; its full sequence is MQKASRKNKKERGVSIKVKTSVHNLSKTQQTKLTVGRLGLGLIIIQHGPYLQITHLIRKGAAANDGKLQPGDVLISVGYANVLGYTLREFLQLLQHITVGTVLQIKVYRDFINIPEEWLEIYDLIPEAKFPVTSTPKKMELAKDESFTSSDDNENVDLDRRLQYYRYPWSTAHHPARRPISISRDWHGYKKKNHTISVGKDIDCDVMIHRDDKKEVKAPSPYWIMVKQDNETSSSSTSSTSDAFWLEDCAQVEEGKAQPVSKFG.

The 88-residue stretch at 22–109 (VHNLSKTQQT…GTVLQIKVYR (88 aa)) folds into the PDZ domain.

The protein is PDZ domain-containing protein 9 (PDZD9) of Macaca fascicularis (Crab-eating macaque).